The primary structure comprises 142 residues: Protein-export protein SecB (142 aa).

Belongs to the SecB family. In terms of assembly, homotetramer, a dimer of dimers. One homotetramer interacts with 1 SecA dimer.

It is found in the cytoplasm. Its function is as follows. One of the proteins required for the normal export of preproteins out of the cell cytoplasm. It is a molecular chaperone that binds to a subset of precursor proteins, maintaining them in a translocation-competent state. It also specifically binds to its receptor SecA. The protein is Protein-export protein SecB of Buchnera aphidicola subsp. Acyrthosiphon pisum (strain 5A).